The chain runs to 297 residues: Tyrosine recombinase XerD (297 aa).

The region spanning 1 to 86 is the Core-binding (CB) domain; it reads MKNLALIDLF…AMRKLFQYLY (86 aa). Positions 107-291 constitute a Tyr recombinase domain; that stretch reads RLPKYLTEQQ…AKERLKRLHE (185 aa). Residues arginine 147, lysine 171, histidine 243, arginine 246, and histidine 269 contribute to the active site. The active-site O-(3'-phospho-DNA)-tyrosine intermediate is tyrosine 278.

The protein belongs to the 'phage' integrase family. XerD subfamily. In terms of assembly, forms a cyclic heterotetrameric complex composed of two molecules of XerC and two molecules of XerD.

The protein resides in the cytoplasm. Site-specific tyrosine recombinase, which acts by catalyzing the cutting and rejoining of the recombining DNA molecules. The XerC-XerD complex is essential to convert dimers of the bacterial chromosome into monomers to permit their segregation at cell division. It also contributes to the segregational stability of plasmids. The polypeptide is Tyrosine recombinase XerD (Haemophilus influenzae (strain ATCC 51907 / DSM 11121 / KW20 / Rd)).